The sequence spans 371 residues: D-alanine--D-alanine ligase (371 aa).

In terms of domain architecture, ATP-grasp spans 154–361 (KKLLVAEGLP…YPTLLAAMVD (208 aa)). 182-237 (RERLGLPVFVKPARGGSSIGVSRVSDWAELPAAIEAARRHDPKVIVEAGIAGRELE) provides a ligand contact to ATP. Mg(2+) is bound by residues aspartate 316, glutamate 328, and asparagine 330.

Belongs to the D-alanine--D-alanine ligase family. Requires Mg(2+) as cofactor. Mn(2+) is required as a cofactor.

Its subcellular location is the cytoplasm. It catalyses the reaction 2 D-alanine + ATP = D-alanyl-D-alanine + ADP + phosphate + H(+). Its pathway is cell wall biogenesis; peptidoglycan biosynthesis. Functionally, cell wall formation. In Mycobacterium sp. (strain KMS), this protein is D-alanine--D-alanine ligase.